The following is a 218-amino-acid chain: Pyrrolidone-carboxylate peptidase (218 aa).

Catalysis depends on residues Glu81, Cys144, and His169.

The protein belongs to the peptidase C15 family. Homotetramer.

Its subcellular location is the cytoplasm. It catalyses the reaction Release of an N-terminal pyroglutamyl group from a polypeptide, the second amino acid generally not being Pro.. Removes 5-oxoproline from various penultimate amino acid residues except L-proline. The polypeptide is Pyrrolidone-carboxylate peptidase (pcp) (Deinococcus radiodurans (strain ATCC 13939 / DSM 20539 / JCM 16871 / CCUG 27074 / LMG 4051 / NBRC 15346 / NCIMB 9279 / VKM B-1422 / R1)).